Reading from the N-terminus, the 993-residue chain is DNA-binding protein SMUBP-2 (993 aa).

Ala2 bears the N-acetylalanine mark. ATP is bound by residues 214 to 221 (GPPGTGKT), Gln403, Tyr442, and Glu571. Residues 638 to 785 (TAFEYLDDIV…KRRFITVSKR (148 aa)) form an SS DNA-binding region. Disordered regions lie at residues 651 to 723 (YSHE…VESQ), 782 to 828 (VSKR…PDQP), and 841 to 879 (VRSA…DLPT). Polar residues-rich tracts occupy residues 653–662 (HENSQGSSHA) and 669–681 (PATS…QRQE). Residues 723–786 (QDGVDHFRAM…RRFITVSKRA (64 aa)) form the R3H domain. Positions 818–828 (PPREQRGPDQP) are enriched in basic and acidic residues. Positions 842-859 (RSAQGQPASKEQQASGQQ) are enriched in polar residues. A Nuclear localization signal motif is present at residues 864-868 (KKKKK). The AN1-type zinc finger occupies 891–940 (VKADNTCGFAKCTAGVTTLGQFCQLCSRRYCLSHHLPEIHGCGERARAHA). Zn(2+) contacts are provided by Cys897, Cys902, Cys913, Cys916, Cys921, His924, His930, and Cys932. The segment at 971–993 (RRLDKKLSELSNQRTSRRKERGT) is disordered.

This sequence belongs to the DNA2/NAM7 helicase family. As to quaternary structure, homooligomer. Interacts with RUVBL1. Interacts with RUVBL2. Interacts with GTF3C1. Interacts with ABT1. Interacts with ribosomes. As to expression, expressed in all tissues examined. Expressed in the developing and adult human brain, with highest expression in the cerebellum. Moderately expressed in fibroblasts.

The protein resides in the nucleus. The protein localises to the cytoplasm. It localises to the cell projection. It is found in the axon. It carries out the reaction ATP + H2O = ADP + phosphate + H(+). 5' to 3' helicase that unwinds RNA and DNA duplexes in an ATP-dependent reaction. Specific to 5'-phosphorylated single-stranded guanine-rich sequences. May play a role in RNA metabolism, ribosome biogenesis or initiation of translation. May play a role in regulation of transcription. Interacts with tRNA-Tyr. This Homo sapiens (Human) protein is DNA-binding protein SMUBP-2 (IGHMBP2).